Consider the following 754-residue polypeptide: 5-methyltetrahydropteroyltriglutamate--homocysteine methyltransferase (754 aa).

Residues 16–19 (RELK) and lysine 114 each bind 5-methyltetrahydropteroyltri-L-glutamate. Residues 430 to 432 (IGS) and glutamate 483 contribute to the L-homocysteine site. L-methionine contacts are provided by residues 430–432 (IGS) and glutamate 483. Residues 514 to 515 (RC) and tryptophan 560 contribute to the 5-methyltetrahydropteroyltri-L-glutamate site. Aspartate 598 provides a ligand contact to L-homocysteine. Aspartate 598 is a binding site for L-methionine. Glutamate 604 is a 5-methyltetrahydropteroyltri-L-glutamate binding site. Zn(2+) is bound by residues histidine 640, cysteine 642, and glutamate 664. The active-site Proton donor is histidine 693. Cysteine 725 is a binding site for Zn(2+).

Belongs to the vitamin-B12 independent methionine synthase family. The cofactor is Zn(2+).

It carries out the reaction 5-methyltetrahydropteroyltri-L-glutamate + L-homocysteine = tetrahydropteroyltri-L-glutamate + L-methionine. It functions in the pathway amino-acid biosynthesis; L-methionine biosynthesis via de novo pathway; L-methionine from L-homocysteine (MetE route): step 1/1. In terms of biological role, catalyzes the transfer of a methyl group from 5-methyltetrahydrofolate to homocysteine resulting in methionine formation. The chain is 5-methyltetrahydropteroyltriglutamate--homocysteine methyltransferase from Aeromonas salmonicida (strain A449).